The chain runs to 194 residues: Peptide deformylase (194 aa).

The segment at 71-93 (DAEPEECGHDHGDGEGAHKHYPV) is disordered. Positions 76–93 (ECGHDHGDGEGAHKHYPV) are enriched in basic and acidic residues. 2 residues coordinate Fe cation: Cys119 and His161. Glu162 is an active-site residue. Position 165 (His165) interacts with Fe cation.

It belongs to the polypeptide deformylase family. Fe(2+) is required as a cofactor.

The catalysed reaction is N-terminal N-formyl-L-methionyl-[peptide] + H2O = N-terminal L-methionyl-[peptide] + formate. In terms of biological role, removes the formyl group from the N-terminal Met of newly synthesized proteins. Requires at least a dipeptide for an efficient rate of reaction. N-terminal L-methionine is a prerequisite for activity but the enzyme has broad specificity at other positions. This chain is Peptide deformylase, found in Erythrobacter litoralis (strain HTCC2594).